The primary structure comprises 360 residues: MPHCFTFKPASPEGSLGDDHLPHPSPEGSVASTFNLSHELAHAFQTPSYHDIRSRLLVIDPTQENLELFLSQELRPNNESVQEALSLRHAKQTTLTNLVSTYFQHSEDATRFCLNLYQNVHSARCHLYTPLLDLFNIFPRDSHSAIDESFCNLAFDVFLKLDTFENPFASPESHSFQDTQLCFYQLADKLDTRIRKSKSRVRLLHHATAGSALCLVTAVVVVAASAAFIAYHALPTILVVAGPLCTPYLPHSFKKKELSNIFQLNVAAKGTFALNKDLDTIDRLVSRLHTGVKNDKLLIRLGLERGRDVYTIPEFVKQLRKSHVNHTHQLEVLVDHICRWFTNVNKSRSLLLKEILRPQT.

The interval 1-29 is disordered; that stretch reads MPHCFTFKPASPEGSLGDDHLPHPSPEGS. The next 2 helical transmembrane spans lie at 205-225 and 229-249; these read HHAT…VAAS and IAYH…TPYL.

It belongs to the UPF0496 family.

It localises to the membrane. This is UPF0496 protein At3g19250 from Arabidopsis thaliana (Mouse-ear cress).